The following is a 402-amino-acid chain: MTQIAYFDCPTGIAGNMCLGALVDAGVPLSYLEQQLQRLSLSEPYQLVATPVLRQGMAATYVEVQIEAAPHAHRHLSHIVALIEAAGLPDRVRDWSIAVFQQLAIAEAAVHGVTPEQVHFHEVGATDAIVDIVGTCLGLDYLGIEAVYCSALPTGGGTVKAAHGQLSVPVPAVLRLWQLRQVPVYSNGIERELVTPTGAAIAVTLAKSFGPPPSLQLQKTGWGAGSHDLPIPNLLKLWIGTASDLVMTPQSPEGSLETVQVIETQIDDCSPQVLAYVSEQLLAQGALEVFSQAITMKKGRLGTLLTIICQPDQQAACETILFRETTTIGLRFRREQRRVLPRRRDRVQTPWGEVRVKVAGDPQSPLTVQPEYEDCRAIAQAQQIALHHIQTVAQQQWQQENA.

The protein belongs to the LarC family.

The sequence is that of Putative nickel insertion protein from Synechococcus elongatus (strain ATCC 33912 / PCC 7942 / FACHB-805) (Anacystis nidulans R2).